The following is a 719-amino-acid chain: Homeobox protein SIX5 (719 aa).

2 stretches are compositionally biased toward low complexity: residues 1-22 (MATSPAEPSAGPAARGEAAAAT) and 31-65 (QLLQTLQAAEGEAAAAGAGDAAAAADSGSPSGPGS). Disordered regions lie at residues 1–73 (MATS…VTEV) and 241–287 (WFKN…VASM). The segment at residues 194 to 253 (GEETVYCFKERSRAALKACYRGNRYPTPDEKRRLATLTGLSLTQVSNWFKNRRQRDRTGT) is a DNA-binding region (homeobox). Residues 272 to 282 (ESSRSPEDLER) show a composition bias toward basic and acidic residues.

Belongs to the SIX/Sine oculis homeobox family. As to quaternary structure, probably binds DNA dimer. Interacts with EYA3, and probably EYA1 and EYA2.

It localises to the nucleus. Functionally, transcription factor that is thought to be involved in regulation of organogenesis. May be involved in determination and maintenance of retina formation. Binds a 5'-GGTGTCAG-3' motif present in the ARE regulatory element of ATP1A1. Binds a 5'-TCA[AG][AG]TTNC-3' motif present in the MEF3 element in the myogenin promoter, and in the IGFBP5 promoter. Thought to be regulated by association with Dach and Eya proteins, and seems to be coactivated by EYA1, EYA2 and EYA3. This Mus musculus (Mouse) protein is Homeobox protein SIX5 (Six5).